Consider the following 544-residue polypeptide: Chaperonin GroEL (544 aa).

ATP-binding positions include 30 to 33 (TLGP), Lys-51, 87 to 91 (DGTTT), Gly-415, and Asp-495.

This sequence belongs to the chaperonin (HSP60) family. In terms of assembly, forms a cylinder of 14 subunits composed of two heptameric rings stacked back-to-back. Interacts with the co-chaperonin GroES.

It localises to the cytoplasm. It carries out the reaction ATP + H2O + a folded polypeptide = ADP + phosphate + an unfolded polypeptide.. Functionally, together with its co-chaperonin GroES, plays an essential role in assisting protein folding. The GroEL-GroES system forms a nano-cage that allows encapsulation of the non-native substrate proteins and provides a physical environment optimized to promote and accelerate protein folding. The protein is Chaperonin GroEL of Neisseria meningitidis serogroup A / serotype 4A (strain DSM 15465 / Z2491).